Consider the following 151-residue polypeptide: SsrA-binding protein (151 aa).

This sequence belongs to the SmpB family.

It localises to the cytoplasm. Required for rescue of stalled ribosomes mediated by trans-translation. Binds to transfer-messenger RNA (tmRNA), required for stable association of tmRNA with ribosomes. tmRNA and SmpB together mimic tRNA shape, replacing the anticodon stem-loop with SmpB. tmRNA is encoded by the ssrA gene; the 2 termini fold to resemble tRNA(Ala) and it encodes a 'tag peptide', a short internal open reading frame. During trans-translation Ala-aminoacylated tmRNA acts like a tRNA, entering the A-site of stalled ribosomes, displacing the stalled mRNA. The ribosome then switches to translate the ORF on the tmRNA; the nascent peptide is terminated with the 'tag peptide' encoded by the tmRNA and targeted for degradation. The ribosome is freed to recommence translation, which seems to be the essential function of trans-translation. The protein is SsrA-binding protein of Chlamydia trachomatis serovar A (strain ATCC VR-571B / DSM 19440 / HAR-13).